Reading from the N-terminus, the 240-residue chain is Uridylate kinase (240 aa).

13–16 (KFSG) is a binding site for ATP. Residue G55 coordinates UMP. 2 residues coordinate ATP: G56 and R60. UMP is bound by residues D76 and 137-144 (TGNPFFTT). Residues T164, Y170, and D173 each contribute to the ATP site.

This sequence belongs to the UMP kinase family. As to quaternary structure, homohexamer.

It is found in the cytoplasm. The enzyme catalyses UMP + ATP = UDP + ADP. Its pathway is pyrimidine metabolism; CTP biosynthesis via de novo pathway; UDP from UMP (UMPK route): step 1/1. Inhibited by UTP. In terms of biological role, catalyzes the reversible phosphorylation of UMP to UDP. The protein is Uridylate kinase of Helicobacter acinonychis (strain Sheeba).